Here is a 312-residue protein sequence, read N- to C-terminus: Glyoxylate/hydroxypyruvate reductase A (312 aa).

Arginine 227 is an active-site residue. Histidine 275 functions as the Proton donor in the catalytic mechanism.

The protein belongs to the D-isomer specific 2-hydroxyacid dehydrogenase family. GhrA subfamily.

The protein resides in the cytoplasm. The catalysed reaction is glycolate + NADP(+) = glyoxylate + NADPH + H(+). It catalyses the reaction (R)-glycerate + NAD(+) = 3-hydroxypyruvate + NADH + H(+). It carries out the reaction (R)-glycerate + NADP(+) = 3-hydroxypyruvate + NADPH + H(+). Functionally, catalyzes the NADPH-dependent reduction of glyoxylate and hydroxypyruvate into glycolate and glycerate, respectively. Inactive towards 2-oxo-D-gluconate, 2-oxoglutarate, oxaloacetate and pyruvate. Only D- and L-glycerate are involved in the oxidative activity with NADP. Activity with NAD is very low. The sequence is that of Glyoxylate/hydroxypyruvate reductase A (ghrA) from Escherichia coli (strain K12).